Reading from the N-terminus, the 240-residue chain is uncharacterized protein (240 aa).

The chain crosses the membrane as a helical span at residues 73-93 (LLGCLYFFIYFVAPTLGPVLF).

It belongs to the universal ribosomal protein uS3 family.

The protein localises to the mitochondrion membrane. This is an uncharacterized protein from Arabidopsis thaliana (Mouse-ear cress).